The following is a 165-amino-acid chain: LOB domain-containing protein 21 (165 aa).

One can recognise an LOB domain in the interval 10 to 111 (SSCAACKLLK…HDLAVARTRL (102 aa)).

This sequence belongs to the LOB domain-containing protein family.

The polypeptide is LOB domain-containing protein 21 (LBD21) (Arabidopsis thaliana (Mouse-ear cress)).